A 413-amino-acid chain; its full sequence is Autophagy-related protein 18 (413 aa).

WD repeat units lie at residues methionine 1–glutamate 36, lysine 69–threonine 114, proline 141–valine 182, alanine 185–glutamine 225, and serine 230–serine 269. Residues phenylalanine 226–serine 230 carry the L/FRRG motif motif. Positions glutamine 263 to serine 289 are enriched in low complexity. Residues glutamine 263–glycine 315 are disordered. Over residues serine 296–histidine 305 the composition is skewed to basic and acidic residues. 2 WD repeats span residues lysine 308–lysine 354 and glycine 366–glycine 406.

The protein belongs to the WD repeat PROPPIN family. In terms of assembly, component of the PI(3,5)P2 regulatory complex.

The protein localises to the preautophagosomal structure membrane. The protein resides in the vacuole membrane. It is found in the endosome membrane. The PI(3,5)P2 regulatory complex regulates both the synthesis and turnover of phosphatidylinositol 3,5-bisphosphate (PtdIns(3,5)P2). Necessary for proper vacuole morphology. Plays an important role in osmotically-induced vacuole fragmentation. Required for cytoplasm to vacuole transport (Cvt) vesicle formation, pexophagy and starvation-induced autophagy. Involved in correct atg9 trafficking to the pre-autophagosomal structure. Might also be involved in premeiotic DNA replication. The sequence is that of Autophagy-related protein 18 (atg18) from Aspergillus oryzae (strain ATCC 42149 / RIB 40) (Yellow koji mold).